The primary structure comprises 702 residues: Elongation factor G 2 (702 aa).

In terms of domain architecture, tr-type G spans 8 to 291; the sequence is ELYRNIGIVA…AVIDYLPAPS (284 aa). GTP contacts are provided by residues 17 to 24, 89 to 93, and 143 to 146; these read AHVDAGKT, DTPGH, and NKMD. Residues 293-314 form a disordered region; sequence IPAIRGTDPDDEEKHDERHADD.

This sequence belongs to the TRAFAC class translation factor GTPase superfamily. Classic translation factor GTPase family. EF-G/EF-2 subfamily.

It is found in the cytoplasm. Catalyzes the GTP-dependent ribosomal translocation step during translation elongation. During this step, the ribosome changes from the pre-translocational (PRE) to the post-translocational (POST) state as the newly formed A-site-bound peptidyl-tRNA and P-site-bound deacylated tRNA move to the P and E sites, respectively. Catalyzes the coordinated movement of the two tRNA molecules, the mRNA and conformational changes in the ribosome. This Pseudomonas aeruginosa (strain ATCC 15692 / DSM 22644 / CIP 104116 / JCM 14847 / LMG 12228 / 1C / PRS 101 / PAO1) protein is Elongation factor G 2 (fusB).